Here is a 470-residue protein sequence, read N- to C-terminus: Heparan-sulfate 6-O-sulfotransferase 3 (470 aa).

Residues 1–4 (MDER) lie on the Cytoplasmic side of the membrane. Residues 5–27 (FNKWLLTPVLTLLFVVIMYQYVS) traverse the membrane as a helical; Signal-anchor for type II membrane protein segment. Over 28 to 470 (PSCTSSCTNF…EDYNSQVVRW (443 aa)) the chain is Lumenal. Residues 36–121 (NFGEQLRSGE…EAPENGSLPR (86 aa)) are disordered. A compositionally biased stretch (acidic residues) spans 88 to 113 (PEDEDEDPGDPEEEEEEEEEEPDPEA). N-linked (GlcNAc...) asparagine glycans are attached at residues asparagine 116 and asparagine 127. A 3'-phosphoadenylyl sulfate-binding site is contributed by 151–159 (HIQKTGGTT). Residues 181-182 (KK), arginine 198, tryptophan 203, and histidine 208 each bind substrate. Histidine 208 serves as the catalytic Proton acceptor. N-linked (GlcNAc...) asparagine glycosylation occurs at asparagine 230. Positions 244 and 252 each coordinate 3'-phosphoadenylyl sulfate. Positions 256 and 263 each coordinate substrate. N-linked (GlcNAc...) asparagine glycans are attached at residues asparagine 323 and asparagine 328. 376–378 (TQF) provides a ligand contact to 3'-phosphoadenylyl sulfate. A glycan (N-linked (GlcNAc...) asparagine) is linked at asparagine 379. Residue 382–383 (RA) coordinates 3'-phosphoadenylyl sulfate. The interval 421 to 453 (TKQLEHQRDRQKRREERRLQREHRAHRWPKEDR) is disordered. Over residues 422–439 (KQLEHQRDRQKRREERRL) the composition is skewed to basic and acidic residues.

Belongs to the sulfotransferase 6 family. In terms of tissue distribution, ubiquitously expressed.

The protein resides in the membrane. The enzyme catalyses alpha-D-glucosaminyl-[heparan sulfate](n) + 3'-phosphoadenylyl sulfate = 6-sulfo-alpha-D-glucosaminyl-[heparan sulfate](n) + adenosine 3',5'-bisphosphate + H(+). Its function is as follows. 6-O-sulfation enzyme which catalyzes the transfer of sulfate from 3'-phosphoadenosine 5'-phosphosulfate (PAPS) to position 6 of the N-sulfoglucosamine residue (GlcNS) of heparan sulfate. The polypeptide is Heparan-sulfate 6-O-sulfotransferase 3 (Hs6st3) (Mus musculus (Mouse)).